We begin with the raw amino-acid sequence, 162 residues long: Shikimate kinase (162 aa).

11 to 16 (GSGKSS) contributes to the ATP binding site. Ser-15 lines the Mg(2+) pocket. Substrate contacts are provided by Asp-33, Arg-57, and Gly-80. Arg-116 lines the ATP pocket. Arg-132 is a substrate binding site.

The protein belongs to the shikimate kinase family. As to quaternary structure, monomer. Requires Mg(2+) as cofactor.

It localises to the cytoplasm. The enzyme catalyses shikimate + ATP = 3-phosphoshikimate + ADP + H(+). Its pathway is metabolic intermediate biosynthesis; chorismate biosynthesis; chorismate from D-erythrose 4-phosphate and phosphoenolpyruvate: step 5/7. In terms of biological role, catalyzes the specific phosphorylation of the 3-hydroxyl group of shikimic acid using ATP as a cosubstrate. The protein is Shikimate kinase of Helicobacter acinonychis (strain Sheeba).